The chain runs to 703 residues: Protein FAR1-RELATED SEQUENCE 6 (703 aa).

The disordered stretch occupies residues 1-29 (MERSESVDEDVQASAYLENDEVRERDDPM). The FAR1 domain occupies 99 to 184 (NYYNCYASEV…TLDHNHLLGC (86 aa)). Positions 297–392 (VIFIDSSYIS…SLTHIMRKIP (96 aa)) constitute an MULE domain. The SWIM-type zinc finger occupies 584–620 (FEVLYNRSVGEVRCICSCFNFYGYLCRHALCVLNFNG).

It belongs to the FHY3/FAR1 family. In terms of tissue distribution, expressed in hypocotyls, rosette and cauline leaves, inflorescences stems, flowers and siliques.

The protein localises to the nucleus. In terms of biological role, putative transcription activator involved in regulating light control of development. May have a role in controlling flowering time. This chain is Protein FAR1-RELATED SEQUENCE 6 (FRS6), found in Arabidopsis thaliana (Mouse-ear cress).